The primary structure comprises 194 residues: Ribonuclease HII (194 aa).

Residues 16-194 enclose the RNase H type-2 domain; the sequence is CIVAGIDEAG…PYHRRSFRCC (179 aa). A divalent metal cation is bound by residues Asp22, Glu23, and Asp113.

It belongs to the RNase HII family. Requires Mn(2+) as cofactor. It depends on Mg(2+) as a cofactor.

The protein resides in the cytoplasm. It catalyses the reaction Endonucleolytic cleavage to 5'-phosphomonoester.. Functionally, endonuclease that specifically degrades the RNA of RNA-DNA hybrids. The sequence is that of Ribonuclease HII from Rickettsia massiliae (strain Mtu5).